The following is a 282-amino-acid chain: Undecaprenyl-diphosphatase (282 aa).

6 helical membrane-spanning segments follow: residues 90–110 (YWLGWYVIIGTIPICILGLVC), 121–141 (LWVVATALVAFSGVIAFAEYV), 165–185 (LALIPGVSRSGSTISAGLFLG), 194–214 (FGFLLAIPAVFASGLFSIPDA), 228–248 (QLLVATVIAFVVGLVAVSWLL), and 256–276 (LYWFVGYRIVVGVGVLILLAV).

It belongs to the UppP family.

Its subcellular location is the cell membrane. It carries out the reaction di-trans,octa-cis-undecaprenyl diphosphate + H2O = di-trans,octa-cis-undecaprenyl phosphate + phosphate + H(+). Functionally, catalyzes the dephosphorylation of undecaprenyl diphosphate (UPP). Confers resistance to bacitracin. The chain is Undecaprenyl-diphosphatase from Mycobacterium leprae (strain Br4923).